Consider the following 110-residue polypeptide: uncharacterized protein (110 aa).

Residues 18–34 (MFPLISTFTSIGLGVLM) form a helical membrane-spanning segment.

The protein resides in the membrane. This is an uncharacterized protein from Saccharomyces cerevisiae (strain ATCC 204508 / S288c) (Baker's yeast).